The chain runs to 241 residues: 15,16-dihydrobiliverdin:ferredoxin oxidoreductase (241 aa).

Residues 16 to 35 are disordered; it reads RGGQPAAVPEGLEHCHSSKS.

This sequence belongs to the HY2 family.

It carries out the reaction 15,16-dihydrobiliverdin + oxidized 2[4Fe-4S]-[ferredoxin] = biliverdin IXalpha + reduced 2[4Fe-4S]-[ferredoxin] + 2 H(+). In terms of biological role, catalyzes the two-electron reduction of biliverdin IX-alpha at the C15 methine bridge. The sequence is that of 15,16-dihydrobiliverdin:ferredoxin oxidoreductase from Synechococcus sp. (strain WH7803).